A 191-amino-acid polypeptide reads, in one-letter code: Glycerol-3-phosphate acyltransferase (191 aa).

6 consecutive transmembrane segments (helical) span residues Ile-7–Gly-27, Lys-51–Ala-71, Phe-80–Phe-100, Phe-115–Phe-135, Ser-139–Ala-159, and Glu-161–Val-181.

It belongs to the PlsY family. Probably interacts with PlsX.

It localises to the cell inner membrane. It carries out the reaction an acyl phosphate + sn-glycerol 3-phosphate = a 1-acyl-sn-glycero-3-phosphate + phosphate. It participates in lipid metabolism; phospholipid metabolism. Catalyzes the transfer of an acyl group from acyl-phosphate (acyl-PO(4)) to glycerol-3-phosphate (G3P) to form lysophosphatidic acid (LPA). This enzyme utilizes acyl-phosphate as fatty acyl donor, but not acyl-CoA or acyl-ACP. This is Glycerol-3-phosphate acyltransferase from Ehrlichia canis (strain Jake).